A 361-amino-acid polypeptide reads, in one-letter code: Chalcone synthase A (361 aa).

Residue Cys168 is part of the active site.

The protein belongs to the thiolase-like superfamily. Chalcone/stilbene synthases family.

The catalysed reaction is (E)-4-coumaroyl-CoA + 3 malonyl-CoA + 3 H(+) = 2',4,4',6'-tetrahydroxychalcone + 3 CO2 + 4 CoA. It participates in secondary metabolite biosynthesis; flavonoid biosynthesis. Functionally, the primary product of this enzyme is 4,2',4',6'-tetrahydroxychalcone (also termed naringenin-chalcone or chalcone) which can under specific conditions spontaneously isomerize into naringenin. This chain is Chalcone synthase A (CHSA), found in Ipomoea cordatotriloba (Tievine).